Reading from the N-terminus, the 266-residue chain is UPF0294 protein Ent638_0743 (266 aa).

Belongs to the UPF0294 family.

The protein resides in the cytoplasm. The protein is UPF0294 protein Ent638_0743 of Enterobacter sp. (strain 638).